The following is a 38-amino-acid chain: U9-ctenitoxin-Pk1a (38 aa).

4 cysteine pairs are disulfide-bonded: cysteine 2-cysteine 17, cysteine 9-cysteine 22, cysteine 16-cysteine 36, and cysteine 24-cysteine 34.

Expressed by the venom gland.

The protein localises to the secreted. The protein is U9-ctenitoxin-Pk1a of Phoneutria keyserlingi (Brazilian wandering spider).